The sequence spans 186 residues: Interferon beta-3 (186 aa).

Residues 1 to 21 form the signal peptide; sequence MTYRCLLPMVLLLCFSTTALS. Cys52 and Cys161 are disulfide-bonded. Asn131 and Asn173 each carry an N-linked (GlcNAc...) asparagine glycan.

It belongs to the alpha/beta interferon family. As to quaternary structure, monomer.

The protein resides in the secreted. Has antiviral, antibacterial and anticancer activities. This Bos taurus (Bovine) protein is Interferon beta-3 (IFNB3).